Reading from the N-terminus, the 192-residue chain is Putative molybdenum cofactor guanylyltransferase (192 aa).

GTP-binding positions include Leu8–Gly10, Lys21, Asp67, and Asp101. Asp101 serves as a coordination point for Mg(2+).

The protein belongs to the MobA family. Monomer. The cofactor is Mg(2+).

The protein resides in the cytoplasm. The catalysed reaction is Mo-molybdopterin + GTP + H(+) = Mo-molybdopterin guanine dinucleotide + diphosphate. Its function is as follows. Transfers a GMP moiety from GTP to Mo-molybdopterin (Mo-MPT) cofactor (Moco or molybdenum cofactor) to form Mo-molybdopterin guanine dinucleotide (Mo-MGD) cofactor. This chain is Putative molybdenum cofactor guanylyltransferase, found in Neisseria meningitidis serogroup B (strain ATCC BAA-335 / MC58).